Reading from the N-terminus, the 1724-residue chain is MAFFRNYSNDTVSHNVLDENEERQNAATFQSSPLNEDVDGTYSERGFDMNMDVQYQSDPEPGCSIRQPNETAVDNVADPVDSHYQSSTKRLGVTGRWGSTFWKDCQPMGQREGSDPAKDSQSGYKEAYHSEDNHSNDRSEKLDSENENDNENEEEDNEMNKHQSGQADVPADEMLSDEYYEQDEDNQSDHVHYKGYSNPTNSRSLPKAGSAVHSNSRTSRAIHKNIHYSDSNHDHNGDADMDYEEEEDEDDPEDADFEPYDAADDGGASKKHGQGWDVSDEDPESDEEIDLSDYEDDYGTKKPKVRQQSKGFRKSSAGLERKSFHVSSRQKRKTSYQDDDSEEDSENDNDEGFRSLARRGTTLRQNNGRSTNTIGQSSEVRSSTRSVRKVSYVESEDSEDIDDGKNRKNQKDDIEEEDADVIEKVLWHQLKGMGEDVQTNNKSTVPVLVSQLFDTEPDWNEMEFLIKWKGQSHLHCQWKTLSDLQNLSGFKKVLNYTKKVTEEIRYRTALSREEIEVNDVSKEMDLDIIKQNSQVERIIADRISKDGLGDVVPEYLVKWQGLSYAEATWEKDVDIAFAQVAIDEYKAREVSIAVQGKMVEQQRTKGKASLRKLDEQPEWLIGGTLRDYQLEGLNFLVNSWLNDTNVILADEMGLGKTVQSVSMLGFLQNTQQIPGPFLVVVPLSTLANWAKEFRKWLPGMNIIVYVGTRASREVCQQYEFYNEKKVGRPIKFNALLTTYEVVLKDKAVLSKIKWIYLMVDEAHRLKNSEAQLYTALLEFSTKNKLLITGTPLQNSVEELWALLHFLDPGKFKNKDEFVENYKNLSSFNESELANLHLELRPHILRRVIKDVEKSLPPKIERILRVEMSPLQKQYYKWILERNFHDLNKGVRGNQVSLLNIVVELKKCCNHPFLFESADHGYGGDINDNSKLDKIILSSGKLVILDKLLVRLRETKHRVLIFSQMVRMLDILAEYLSLRGFQFQRLDGSTKAELRQQAMDHFNAPASDDFCFLLSTRAGGLGINLATADTVVIFDSDWNPQNDLQAMSRAHRIGQQEVVNIYRFVTSKSVEEEILERAKRKMVLDHLVIQKLNAEGRLEKRETKKGSNFDKNELSAILRFGAEELFKEDKNDEESKKRLLSMDIDEILERAEQVEEKHTDETEHELLGAFKVANFCNAEDDGSFWSRWIKPDSVVTAEEALAPRAARNTKSYVDPSHPDRTSKRKKKGSEPPEHTERSQKRRKTEYFVPSTPLLEGTSAQVRGWSYGNLPKRDAQRFYRTVMKFGNHNQMACIAEEVGGVVEAAPEEAQVELFDALIDGCKESVETGNFEPKGPVLDFFGVPVKANELLKRVQGLQLLSKRISRYNDPISQFRVLSYLKPSNWSKGCGWNQIDDARLLLGILYHGFGNWEKIRLDESLGLTKKIAPVELQHHETFLPRAPNLKERATALLEMELAAAGGKNTNAKASRKNSKKVKDNLINQFKAPARDRRGKSGPANVSLLSTKDGPRKTQKAEPLVKEEGEMSDDGEVYEQFKEQKWMEWCEDVLADEIKTLGRLQRLQTTSADLPKEKVLFKIRRYLEILGRRIDAIVLEHEEDLYKQDRMTMRLWNYVSTFSNLSGDRLNQIYSKLKQEKEEEEGVGPSHLNGSRNFQRQQKFKTAGNSQGSQQVHKGIDTAKFEAWKRRRRTENDVQTERPTITNSNSLGILGPGPLDRSHRARQTGFPPR.

Disordered regions lie at residues 24 to 88 (QNAA…QSST) and 104 to 415 (DCQP…DDIE). The segment covering 25–34 (NAATFQSSPL) has biased composition (polar residues). Basic and acidic residues predominate over residues 126–144 (EAYHSEDNHSNDRSEKLDS). A coiled-coil region spans residues 138 to 164 (RSEKLDSENENDNENEEEDNEMNKHQS). Acidic residues-rich tracts occupy residues 145-157 (ENENDNENEEEDN), 170-186 (PADEMLSDEYYEQDEDN), 239-264 (ADMDYEEEEDEDDPEDADFEPYDAAD), and 278-297 (VSDEDPESDEEIDLSDYEDD). Over residues 301–313 (KKPKVRQQSKGFR) the composition is skewed to basic residues. A Nuclear localization signal 1 motif is present at residues 320-327 (ERKSFHVS). Residues 337 to 350 (QDDDSEEDSENDND) show a composition bias toward acidic residues. Residues 362 to 376 (TLRQNNGRSTNTIGQ) show a composition bias toward polar residues. Over residues 403-412 (DGKNRKNQKD) the composition is skewed to basic and acidic residues. The 80-residue stretch at 420–499 (DVIEKVLWHQ…FKKVLNYTKK (80 aa)) folds into the Chromo 1 domain. A coiled-coil region spans residues 505–525 (RYRTALSREEIEVNDVSKEMD). In terms of domain architecture, Chromo 2 spans 533–597 (SQVERIIADR…REVSIAVQGK (65 aa)). Residues 637 to 809 (VNSWLNDTNV…WALLHFLDPG (173 aa)) enclose the Helicase ATP-binding domain. ATP is bound at residue 650-657 (DEMGLGKT). Positions 760-763 (DEAH) match the DEAH box motif. One can recognise a Helicase C-terminal domain in the interval 943 to 1094 (ILDKLLVRLR…HLVIQKLNAE (152 aa)). Residues 1126–1163 (KEDKNDEESKKRLLSMDIDEILERAEQVEEKHTDETEH) adopt a coiled-coil conformation. A disordered region spans residues 1199 to 1245 (ALAPRAARNTKSYVDPSHPDRTSKRKKKGSEPPEHTERSQKRRKTEY). 2 consecutive short sequence motifs (nuclear localization signal) follow at residues 1224-1231 (KKKGSEPP) and 1348-1355 (LKRVQGLQ). Residues 1227–1237 (GSEPPEHTERS) show a composition bias toward basic and acidic residues. 2 disordered regions span residues 1480-1524 (QFKA…EMSD) and 1654-1724 (KFKT…FPPR). Positions 1504 to 1520 (DGPRKTQKAEPLVKEEG) are enriched in basic and acidic residues. Residues 1658-1667 (AGNSQGSQQV) are compositionally biased toward polar residues. Residues 1669-1691 (KGIDTAKFEAWKRRRRTENDVQT) are compositionally biased toward basic and acidic residues. Residues 1692–1702 (ERPTITNSNSL) show a composition bias toward polar residues.

The protein belongs to the SNF2/RAD54 helicase family.

The protein localises to the nucleus. DNA-binding helicase that specifically binds to the promoter of target genes, leading to chromatin remodeling, possibly by promoting deposition of histone H3.3. Probable chromatin remodeling factor. The protein is Protein CHROMATIN REMODELING 5 of Arabidopsis thaliana (Mouse-ear cress).